Here is a 213-residue protein sequence, read N- to C-terminus: Probable nicotinate-nucleotide adenylyltransferase (213 aa).

This sequence belongs to the NadD family.

The enzyme catalyses nicotinate beta-D-ribonucleotide + ATP + H(+) = deamido-NAD(+) + diphosphate. The protein operates within cofactor biosynthesis; NAD(+) biosynthesis; deamido-NAD(+) from nicotinate D-ribonucleotide: step 1/1. Catalyzes the reversible adenylation of nicotinate mononucleotide (NaMN) to nicotinic acid adenine dinucleotide (NaAD). The chain is Probable nicotinate-nucleotide adenylyltransferase from Shigella boydii serotype 18 (strain CDC 3083-94 / BS512).